Here is a 156-residue protein sequence, read N- to C-terminus: ATP synthase subunit b (156 aa).

The helical transmembrane segment at 11 to 31 threads the bilayer; sequence AIAFILFVWFCMKYVWPPLMA.

This sequence belongs to the ATPase B chain family. As to quaternary structure, F-type ATPases have 2 components, F(1) - the catalytic core - and F(0) - the membrane proton channel. F(1) has five subunits: alpha(3), beta(3), gamma(1), delta(1), epsilon(1). F(0) has three main subunits: a(1), b(2) and c(10-14). The alpha and beta chains form an alternating ring which encloses part of the gamma chain. F(1) is attached to F(0) by a central stalk formed by the gamma and epsilon chains, while a peripheral stalk is formed by the delta and b chains.

It is found in the cell inner membrane. Its function is as follows. F(1)F(0) ATP synthase produces ATP from ADP in the presence of a proton or sodium gradient. F-type ATPases consist of two structural domains, F(1) containing the extramembraneous catalytic core and F(0) containing the membrane proton channel, linked together by a central stalk and a peripheral stalk. During catalysis, ATP synthesis in the catalytic domain of F(1) is coupled via a rotary mechanism of the central stalk subunits to proton translocation. Functionally, component of the F(0) channel, it forms part of the peripheral stalk, linking F(1) to F(0). The sequence is that of ATP synthase subunit b from Salmonella agona (strain SL483).